Reading from the N-terminus, the 426-residue chain is Histidine--tRNA ligase (426 aa).

The protein belongs to the class-II aminoacyl-tRNA synthetase family. As to quaternary structure, homodimer.

The protein localises to the cytoplasm. The catalysed reaction is tRNA(His) + L-histidine + ATP = L-histidyl-tRNA(His) + AMP + diphosphate + H(+). The protein is Histidine--tRNA ligase of Microcystis aeruginosa (strain NIES-843 / IAM M-2473).